A 302-amino-acid chain; its full sequence is Ornithine carbamoyltransferase (302 aa).

Carbamoyl phosphate contacts are provided by residues 52–55 (STRT), Gln-79, Arg-103, and 130–133 (HPCQ). L-ornithine is bound by residues Asn-161, Asp-221, and 225–226 (SM). Carbamoyl phosphate-binding positions include 261–262 (CL) and Arg-289.

It belongs to the aspartate/ornithine carbamoyltransferase superfamily. OTCase family.

Its subcellular location is the cytoplasm. It carries out the reaction carbamoyl phosphate + L-ornithine = L-citrulline + phosphate + H(+). Its pathway is amino-acid biosynthesis; L-arginine biosynthesis; L-arginine from L-ornithine and carbamoyl phosphate: step 1/3. In terms of biological role, reversibly catalyzes the transfer of the carbamoyl group from carbamoyl phosphate (CP) to the N(epsilon) atom of ornithine (ORN) to produce L-citrulline. The sequence is that of Ornithine carbamoyltransferase from Methanosarcina mazei (strain ATCC BAA-159 / DSM 3647 / Goe1 / Go1 / JCM 11833 / OCM 88) (Methanosarcina frisia).